The sequence spans 381 residues: Arogenate dehydratase/prephenate dehydratase 2, chloroplastic (381 aa).

The disordered stretch occupies residues 1 to 32 (MAMHTVRLSPATQLHGGISSNLSPPNRKPNNS). The transit peptide at 1 to 66 (MAMHTVRLSP…DANGRDNSVR (66 aa)) directs the protein to the chloroplast. Polar residues predominate over residues 18–32 (ISSNLSPPNRKPNNS). One can recognise a Prephenate dehydratase domain in the interval 100 to 275 (RVAYQGVRGA…NVTRFLMLAR (176 aa)). The 87-residue stretch at 289 to 375 (SIVFSLEEGP…TFLRVLGSYP (87 aa)) folds into the ACT domain.

As to expression, expressed in roots, leaves, stems, flowers and siliques. Most abundant in leaves and seeds.

It is found in the plastid. The protein localises to the chloroplast stroma. It carries out the reaction L-arogenate + H(+) = L-phenylalanine + CO2 + H2O. The catalysed reaction is prephenate + H(+) = 3-phenylpyruvate + CO2 + H2O. It participates in amino-acid biosynthesis; L-phenylalanine biosynthesis; L-phenylalanine from L-arogenate: step 1/1. It functions in the pathway amino-acid biosynthesis; L-phenylalanine biosynthesis; phenylpyruvate from prephenate: step 1/1. Functionally, converts the prephenate produced from the shikimate-chorismate pathway into phenylalanine. Dehydratase that uses arogenate and prephenate as substrates. Utilzes more efficiently arogenate than prephenate. Required for chloroplast division prior to ARC5, but in an ARC3- and ARC6-dependent manner, especially involved in the Z-ring formation. The protein is Arogenate dehydratase/prephenate dehydratase 2, chloroplastic of Arabidopsis thaliana (Mouse-ear cress).